The chain runs to 154 residues: Interleukin-2 (154 aa).

Residues 1–20 form the signal peptide; it reads MYRMQLLSCIALSLALVTNS. O-linked (GalNAc...) threonine glycosylation is present at Thr23. Cys78 and Cys126 are disulfide-bonded.

This sequence belongs to the IL-2 family.

Its subcellular location is the secreted. Cytokine produced by activated CD4-positive helper T-cells and to a lesser extend activated CD8-positive T-cells and natural killer (NK) cells that plays pivotal roles in the immune response and tolerance. Binds to a receptor complex composed of either the high-affinity trimeric IL-2R (IL2RA/CD25, IL2RB/CD122 and IL2RG/CD132) or the low-affinity dimeric IL-2R (IL2RB and IL2RG). Interaction with the receptor leads to oligomerization and conformation changes in the IL-2R subunits resulting in downstream signaling starting with phosphorylation of JAK1 and JAK3. In turn, JAK1 and JAK3 phosphorylate the receptor to form a docking site leading to the phosphorylation of several substrates including STAT5. This process leads to activation of several pathways including STAT, phosphoinositide-3-kinase/PI3K and mitogen-activated protein kinase/MAPK pathways. Functions as a T-cell growth factor and can increase NK-cell cytolytic activity as well. Promotes strong proliferation of activated B-cells and subsequently immunoglobulin production. Plays a pivotal role in regulating the adaptive immune system by controlling the survival and proliferation of regulatory T-cells, which are required for the maintenance of immune tolerance. Moreover, participates in the differentiation and homeostasis of effector T-cell subsets, including Th1, Th2, Th17 as well as memory CD8-positive T-cells. In Macaca mulatta (Rhesus macaque), this protein is Interleukin-2 (IL2).